The sequence spans 198 residues: Holliday junction branch migration complex subunit RuvA (198 aa).

The segment at 1–63 (MYDYIKGQLT…EDAHLLFGFH (63 aa)) is domain I. The domain II stretch occupies residues 64–142 (TEDEKDVFLK…EAPQETGHTK (79 aa)). Positions 143–147 (ARSNK) are flexible linker. Positions 148-198 (AGNTQLDEAIEALLALGYTATELKKIRAFFEGTSETAEQYIKSALKLLMKG) are domain III.

This sequence belongs to the RuvA family. In terms of assembly, homotetramer. Forms an RuvA(8)-RuvB(12)-Holliday junction (HJ) complex. HJ DNA is sandwiched between 2 RuvA tetramers; dsDNA enters through RuvA and exits via RuvB. An RuvB hexamer assembles on each DNA strand where it exits the tetramer. Each RuvB hexamer is contacted by two RuvA subunits (via domain III) on 2 adjacent RuvB subunits; this complex drives branch migration. In the full resolvosome a probable DNA-RuvA(4)-RuvB(12)-RuvC(2) complex forms which resolves the HJ.

It localises to the cytoplasm. The RuvA-RuvB-RuvC complex processes Holliday junction (HJ) DNA during genetic recombination and DNA repair, while the RuvA-RuvB complex plays an important role in the rescue of blocked DNA replication forks via replication fork reversal (RFR). RuvA specifically binds to HJ cruciform DNA, conferring on it an open structure. The RuvB hexamer acts as an ATP-dependent pump, pulling dsDNA into and through the RuvAB complex. HJ branch migration allows RuvC to scan DNA until it finds its consensus sequence, where it cleaves and resolves the cruciform DNA. The chain is Holliday junction branch migration complex subunit RuvA from Streptococcus pyogenes serotype M49 (strain NZ131).